The chain runs to 315 residues: Methenyltetrahydromethanopterin cyclohydrolase (315 aa).

The protein belongs to the MCH family.

The protein localises to the cytoplasm. It carries out the reaction 5,10-methenyl-5,6,7,8-tetrahydromethanopterin + H2O = N(5)-formyl-5,6,7,8-tetrahydromethanopterin + H(+). It participates in one-carbon metabolism; methanogenesis from CO(2); 5,10-methenyl-5,6,7,8-tetrahydromethanopterin from CO(2): step 3/3. Functionally, catalyzes the reversible interconversion of 5-formyl-H(4)MPT to methenyl-H(4)MPT(+). This is Methenyltetrahydromethanopterin cyclohydrolase from Methanosphaerula palustris (strain ATCC BAA-1556 / DSM 19958 / E1-9c).